The following is a 312-amino-acid chain: Pectin lyase (312 aa).

The active site involves R201. The tract at residues 254 to 274 (GSGTFTDTNSVPPITNQKSPK) is disordered. Over residues 256–274 (GTFTDTNSVPPITNQKSPK) the composition is skewed to polar residues.

This sequence belongs to the polysaccharide lyase 1 family.

The enzyme catalyses Eliminative cleavage of (1-&gt;4)-alpha-D-galacturonan methyl ester to give oligosaccharides with 4-deoxy-6-O-methyl-alpha-D-galact-4-enuronosyl groups at their non-reducing ends.. This chain is Pectin lyase (pnl), found in Pseudomonas marginalis (Pseudomonas panacis).